Consider the following 970-residue polypeptide: Rho GTPase-activating protein gacK (970 aa).

The first 20 residues, 1-20, serve as a signal peptide directing secretion; sequence MTLVYEKSSFVLIMAQIAEA. Disordered stretches follow at residues 30 to 49, 258 to 285, 312 to 446, 487 to 550, and 860 to 886; these read SNDL…SAAI, STCS…INQN, EITI…FSPT, STSN…NNNN, and TASS…NDDP. Composition is skewed to low complexity over residues 35–49 and 258–269; these read STSA…SAAI and STCSLSSNASNN. Residues 321–333 are compositionally biased toward pro residues; that stretch reads IPLPPQSSSPPPT. The segment covering 334 to 383 has biased composition (low complexity); it reads RNNQSSPSPSSPQQQNIMPTPPSTSLTPPQSPTLSPSSSTHSTPTQTTTT. A compositionally biased stretch (polar residues) spans 392–406; that stretch reads PSTISQNNARKTQIP. Residues 407–426 show a composition bias toward low complexity; the sequence is TTTTTTTTTTTTTSTTSTTS. Over residues 427–446 the composition is skewed to polar residues; sequence PNPVVNNKNLNTPSSSFSPT. Residues 754 to 970 enclose the Rho-GAP domain; it reads IEDSELVEDN…LELIQFNKSL (217 aa). The span at 860 to 885 shows a compositional bias: low complexity; it reads TASSAATANSSSSGSGNGNSSPNNDD.

Its subcellular location is the cytoplasm. In terms of biological role, rho GTPase-activating protein involved in the signal transduction pathway. The protein is Rho GTPase-activating protein gacK (gacK) of Dictyostelium discoideum (Social amoeba).